The chain runs to 209 residues: Thymidylate kinase (209 aa).

An ATP-binding site is contributed by 10–17; sequence GIDGCGKS.

It belongs to the thymidylate kinase family.

It carries out the reaction dTMP + ATP = dTDP + ADP. Phosphorylation of dTMP to form dTDP in both de novo and salvage pathways of dTTP synthesis. The polypeptide is Thymidylate kinase (Synechococcus sp. (strain CC9902)).